We begin with the raw amino-acid sequence, 677 residues long: UvrABC system protein B (677 aa).

Residues 24–412 (EGVLQGVPAQ…EGIVVEQVIR (389 aa)) enclose the Helicase ATP-binding domain. 37–44 (GVTGSGKT) contacts ATP. The short motif at 90–113 (YYDYYQPEAYLPNSDTYIEKDLAI) is the Beta-hairpin element. Positions 429–591 (QIDDLMEEIQ…ITPQQIKKAR (163 aa)) constitute a Helicase C-terminal domain. One can recognise a UVR domain in the interval 636–671 (EKSIERTRKLMQEAAKKLEFIEAAQYRNELLKLEDL).

This sequence belongs to the UvrB family. Forms a heterotetramer with UvrA during the search for lesions. Interacts with UvrC in an incision complex.

The protein resides in the cytoplasm. In terms of biological role, the UvrABC repair system catalyzes the recognition and processing of DNA lesions. A damage recognition complex composed of 2 UvrA and 2 UvrB subunits scans DNA for abnormalities. Upon binding of the UvrA(2)B(2) complex to a putative damaged site, the DNA wraps around one UvrB monomer. DNA wrap is dependent on ATP binding by UvrB and probably causes local melting of the DNA helix, facilitating insertion of UvrB beta-hairpin between the DNA strands. Then UvrB probes one DNA strand for the presence of a lesion. If a lesion is found the UvrA subunits dissociate and the UvrB-DNA preincision complex is formed. This complex is subsequently bound by UvrC and the second UvrB is released. If no lesion is found, the DNA wraps around the other UvrB subunit that will check the other stand for damage. The chain is UvrABC system protein B from Bacteroides thetaiotaomicron (strain ATCC 29148 / DSM 2079 / JCM 5827 / CCUG 10774 / NCTC 10582 / VPI-5482 / E50).